Consider the following 475-residue polypeptide: Transcription factor EB (475 aa).

The interval 1-52 (MASRIGLRMQLMREQAQQEEQRERMQQQAVMHYMQQQQQQQQQLGGPPTPAI) is disordered. Positions 1–166 (MASRIGLRMQ…DDVIDNIMRL (166 aa)) are interaction with ACSS2. The segment covering 26-43 (QQQAVMHYMQQQQQQQQQ) has biased composition (low complexity). Ser108, Ser113, Ser121, and Ser137 each carry phosphoserine. The Nuclear export signal motif lies at 135 to 152 (GNSAPNSPMAMLHISSNP). Ser141 is modified (phosphoserine; by MTOR). Residues 155–164 (EFDDVIDNIM) form a strong transcription activation domain region. Thr182 bears the Phosphothreonine mark. Ser210 is subject to Phosphoserine; by MTOR. The residue at position 211 (Cys211) is an S-(2,3-dicarboxypropyl)cysteine. Residues 234-287 (QKKDNHNLIERRRRFNINDRIKELGMLIPKANDLDVRWNKGTILKASVDYIRRM) enclose the bHLH domain. The Nuclear localization signal signature appears at 244–247 (RRRR). The tract at residues 297-318 (LENHSRRLEMTNKQLWLRIQEL) is leucine-zipper. Ser331 carries the post-translational modification Phosphoserine. The disordered stretch occupies residues 351-429 (SEDGPGEALM…HGSPFPNLSK (79 aa)). The span at 380–389 (LPSAAQPQSP) shows a compositional bias: low complexity. Phosphoserine is present on residues Ser422, Ser440, Ser465, Ser466, and Ser468. Residues 445 to 468 (ASDPLFSTMSPEASKASSRRSSFS) show a composition bias toward low complexity. The interval 445-475 (ASDPLFSTMSPEASKASSRRSSFSMEEGDVL) is disordered.

It belongs to the MiT/TFE family. As to quaternary structure, homodimer and heterodimer; with TFE3 or MITF. Interacts (when phosphorylated by MTOR) with YWHAZ; promoting retention in the cytosol. Interacts with Irgm1; promoting association between TFEB and PPP3CB and dephosphorylation. Interacts with small GTPases Rag (RagA/RRAGA, RagB/RRAGB, RagC/RRAGC and/or RagD/RRAGD); promoting its recruitment to lysosomal membrane in the presence of nutrients. Interacts with ACSS2. In terms of processing, phosphorylation at Ser-210 by MTOR via non-canonical mTORC1 pathway regulates its subcellular location and activity. When nutrients are present, phosphorylation by MTOR promotes association with 14-3-3/YWHA adapters and retention in the cytosol. Inhibition of mTORC1, starvation and lysosomal disruption, promotes dephosphorylation by calcineurin PPP3CB and translocation to the nucleus. Dephosphorylated by calcineurin PPP3CB in response to lysosomal Ca(2+) release. Irgm1 promotes dephosphorylation by calcineurin PPP3CB, resulting in TFEB nuclear translocation and stimulation of lysosomal biogenesis. Exported from the nucleus in a mTORC1-dependent manner in response to nutrient availability. Post-translationally, alkylated via a non-enzymatic covalent modification. Itaconate, an anti-inflammatory metabolite generated in response to lipopolysaccharide, alkylates Cys-211, preventing association with 14-3-3/YWHA adapters, thereby promoting nuclear translocation and activity. Sumoylated; does not affect dimerization with MITF. As to expression, widely expressed.

Its subcellular location is the nucleus. It is found in the cytoplasm. It localises to the cytosol. The protein resides in the lysosome membrane. In terms of biological role, transcription factor that acts as a master regulator of lysosomal biogenesis, autophagy, lysosomal exocytosis, lipid catabolism, energy metabolism and immune response. Specifically recognizes and binds E-box sequences (5'-CANNTG-3'); efficient DNA-binding requires dimerization with itself or with another MiT/TFE family member such as TFE3 or MITF. Involved in the cellular response to amino acid availability by acting downstream of MTOR: in the presence of nutrients, TFEB phosphorylation by MTOR promotes its cytosolic retention and subsequent inactivation. Upon starvation or lysosomal stress, inhibition of MTOR induces TFEB dephosphorylation, resulting in nuclear localization and transcription factor activity. Specifically recognizes and binds the CLEAR-box sequence (5'-GTCACGTGAC-3') present in the regulatory region of many lysosomal genes, leading to activate their expression, thereby playing a central role in expression of lysosomal genes. Regulates lysosomal positioning in response to nutrient deprivation by promoting the expression of PIP4P1. Acts as a positive regulator of autophagy by promoting expression of genes involved in autophagy. In association with TFE3, activates the expression of CD40L in T-cells, thereby playing a role in T-cell-dependent antibody responses in activated CD4(+) T-cells and thymus-dependent humoral immunity. Specifically recognizes the gamma-E3 box, a subset of E-boxes, present in the heavy-chain immunoglobulin enhancer. Plays a role in the signal transduction processes required for normal vascularization of the placenta. Involved in the immune response to infection by the bacteria S.aureus, S.typhimurium or S.enterica. Infection promotes itaconate production, leading to alkylation, resulting in nuclear localization and transcription factor activity. Itaconate-mediated alkylation activates TFEB-dependent lysosomal biogenesis, facilitating the bacteria clearance during the antibacterial innate immune response. In association with ACSS2, promotes the expression of genes involved in lysosome biogenesis and both autophagy upon glucose deprivation. The sequence is that of Transcription factor EB from Mus musculus (Mouse).